Here is a 434-residue protein sequence, read N- to C-terminus: 26S proteasome regulatory subunit 6A (434 aa).

Alanine 2 carries the post-translational modification N-acetylalanine. Tyrosine 180 is subject to Phosphotyrosine. Residue 222–229 participates in ATP binding; it reads GPPGTGKT.

Belongs to the AAA ATPase family. N-acetylated by NAT1.

Its subcellular location is the cytoplasm. The protein localises to the nucleus. The 26S proteasome is involved in the ATP-dependent degradation of ubiquitinated proteins. The regulatory (or ATPase) complex confers ATP dependency and substrate specificity to the 26S complex. In Saccharomyces cerevisiae (strain ATCC 204508 / S288c) (Baker's yeast), this protein is 26S proteasome regulatory subunit 6A (RPT5).